We begin with the raw amino-acid sequence, 678 residues long: Protein CASP (678 aa).

Residues 1–619 are Cytoplasmic-facing; that stretch reads MAANVGSMFQ…LVLSNKMART (619 aa). 2 coiled-coil regions span residues 67–450 and 502–556; these read LLKS…QDLS and LSII…FLQS. The residue at position 586 (serine 586) is a Phosphoserine. A helical; Anchor for type IV membrane protein membrane pass occupies residues 620–640; the sequence is IGFFYTLFLHCLVFLVLYKLA. Residues 641–678 lie on the Lumenal side of the membrane; it reads WSESMERDCATFCAKKFADHLHKFHENDNGAAAGDLWQ.

It belongs to the CASP family. In terms of assembly, homodimer; disulfide-linked. Interacts with GOLGA5.

It localises to the golgi apparatus membrane. Functionally, may be involved in intra-Golgi retrograde transport. The sequence is that of Protein CASP (CUX1) from Homo sapiens (Human).